Consider the following 249-residue polypeptide: Portal protein (249 aa).

Belongs to the phi29likevirus portal protein family. In terms of assembly, homododecamer. Interacts with the pRNA.

The protein resides in the virion. In terms of biological role, forms the portal vertex of the capsid. This portal plays critical roles in head assembly, genome packaging, neck/tail attachment, and genome ejection. The portal protein multimerizes as a single ring-shaped homododecamer arranged around a central channel. Binds to the 6 packaging RNA molecules (pRNA) forming a double-ring structure which in turn binds to the ATPase gp16 hexamer, forming the active DNA-translocating motor. This complex is essential for the specificity of packaging from the left DNA end. The polypeptide is Portal protein (Staphylococcus phage 44AHJD).